The sequence spans 333 residues: DNA-directed RNA polymerase subunit alpha (333 aa).

The interval 1-234 is alpha N-terminal domain (alpha-NTD); it reads MQISVNEFLT…QQLAAFVDLK (234 aa). The segment at 248–333 is alpha C-terminal domain (alpha-CTD); the sequence is IDPILLRPVD…SLKKDDKATA (86 aa).

This sequence belongs to the RNA polymerase alpha chain family. Homodimer. The RNAP catalytic core consists of 2 alpha, 1 beta, 1 beta' and 1 omega subunit. When a sigma factor is associated with the core the holoenzyme is formed, which can initiate transcription.

It carries out the reaction RNA(n) + a ribonucleoside 5'-triphosphate = RNA(n+1) + diphosphate. Its function is as follows. DNA-dependent RNA polymerase catalyzes the transcription of DNA into RNA using the four ribonucleoside triphosphates as substrates. The protein is DNA-directed RNA polymerase subunit alpha of Pseudomonas syringae pv. tomato (strain ATCC BAA-871 / DC3000).